The primary structure comprises 441 residues: Transforming protein p54/c-ets-1 (441 aa).

The PNT domain occupies 51 to 136; sequence ATFSGFAKEQ…EHLEILQKEE (86 aa). Residues 130 to 243 form an activation domain; required for transcription activation region; that stretch reads EILQKEEAKP…DNMCMGRASR (114 aa). The segment at 304-312 is helix HI-1; the sequence is FKDYVRDRA. The helix HI-2 stretch occupies residues 323 to 330; it reads AAALAGYT. A DNA-binding region (ETS) is located at residues 335–415; that stretch reads IQLWQFLLEL…AGKRYVYRFV (81 aa). The segment at 418–422 is helix H4; the sequence is LQSLL. The helix H5 stretch occupies residues 426–432; that stretch reads PEELHAM.

This sequence belongs to the ETS family. As to quaternary structure, binds DNA as a homodimer; homodimerization is required for transcription activation.

The protein localises to the nucleus. It localises to the cytoplasm. Its activity is regulated as follows. Autoinhibited by a module composed of four alpha helices (HI-1, HI-2, H4, and H5) that flank the DNA-binding ETS domain, reducing the affinity for DNA. Transcription factor. Directly controls the expression of cytokine and chemokine genes in a wide variety of different cellular contexts. The sequence is that of Transforming protein p54/c-ets-1 (ETS1) from Gallus gallus (Chicken).